The primary structure comprises 88 residues: DNA-directed RNA polymerase subunit omega (88 aa).

The protein belongs to the RNA polymerase subunit omega family. In terms of assembly, the RNAP catalytic core consists of 2 alpha, 1 beta, 1 beta' and 1 omega subunit. When a sigma factor is associated with the core the holoenzyme is formed, which can initiate transcription.

It carries out the reaction RNA(n) + a ribonucleoside 5'-triphosphate = RNA(n+1) + diphosphate. Promotes RNA polymerase assembly. Latches the N- and C-terminal regions of the beta' subunit thereby facilitating its interaction with the beta and alpha subunits. In Salinispora tropica (strain ATCC BAA-916 / DSM 44818 / JCM 13857 / NBRC 105044 / CNB-440), this protein is DNA-directed RNA polymerase subunit omega.